Here is a 423-residue protein sequence, read N- to C-terminus: Tyrosine--tRNA ligase (423 aa).

Residue tyrosine 35 coordinates L-tyrosine. Positions 40–49 (PTAPSLHAGH) match the 'HIGH' region motif. Residues tyrosine 170 and glutamine 174 each coordinate L-tyrosine. Positions 230–234 (KFGKS) match the 'KMSKS' region motif. Lysine 233 contacts ATP. Residues 355–412 (DLITDLLVATGLSASKGAARRTIAEGGVSVNNMKIDSDEWTPQASDFLHGRWLVLRRG) form the S4 RNA-binding domain.

It belongs to the class-I aminoacyl-tRNA synthetase family. TyrS type 1 subfamily. Homodimer.

The protein resides in the cytoplasm. The catalysed reaction is tRNA(Tyr) + L-tyrosine + ATP = L-tyrosyl-tRNA(Tyr) + AMP + diphosphate + H(+). Functionally, catalyzes the attachment of tyrosine to tRNA(Tyr) in a two-step reaction: tyrosine is first activated by ATP to form Tyr-AMP and then transferred to the acceptor end of tRNA(Tyr). The sequence is that of Tyrosine--tRNA ligase from Mycobacterium sp. (strain KMS).